A 333-amino-acid chain; its full sequence is NADH-quinone oxidoreductase subunit H (333 aa).

Helical transmembrane passes span 15–35 (FFIF…FVTY), 88–108 (FILA…VIPF), 117–137 (IGVG…GVVT), 159–179 (ISYE…AGSL), 191–211 (VWYI…AVAE), 239–259 (WAFF…LITV), 274–296 (IPGA…WFRV), and 313–333 (VLLP…ELFF).

It belongs to the complex I subunit 1 family. As to quaternary structure, NDH-1 is composed of 14 different subunits. Subunits NuoA, H, J, K, L, M, N constitute the membrane sector of the complex.

It is found in the cell membrane. The catalysed reaction is a quinone + NADH + 5 H(+)(in) = a quinol + NAD(+) + 4 H(+)(out). Functionally, NDH-1 shuttles electrons from NADH, via FMN and iron-sulfur (Fe-S) centers, to quinones in the respiratory chain. The immediate electron acceptor for the enzyme in this species is believed to be ubiquinone. Couples the redox reaction to proton translocation (for every two electrons transferred, four hydrogen ions are translocated across the cytoplasmic membrane), and thus conserves the redox energy in a proton gradient. This subunit may bind ubiquinone. This is NADH-quinone oxidoreductase subunit H from Bacillus anthracis (strain A0248).